The sequence spans 478 residues: Sodium-dependent phosphate transport protein 3 (478 aa).

N-linked (GlcNAc...) asparagine glycans are attached at residues asparagine 28, asparagine 47, asparagine 56, and asparagine 69. Helical transmembrane passes span 98 to 118, 130 to 150, 183 to 203, 211 to 231, 273 to 293, 317 to 337, 341 to 361, 363 to 383, 405 to 425, and 442 to 462; these read ISYG…IFGA, SLLT…VIVI, SIAG…GGLI, FIFY…FTVI, LPLW…TIII, LPFI…DFLL, LLSL…LPSL, AVAL…LILI, YASF…IISS, and NVFF…LIFG.

The protein belongs to the major facilitator superfamily. Sodium/anion cotransporter family. Expressed in the liver, kidney, placenta, lung and thyroid (at protein level).

It localises to the apical cell membrane. It catalyses the reaction 3 Na(+)(out) + phosphate(out) = 3 Na(+)(in) + phosphate(in). It carries out the reaction urate(out) + n chloride(in) = urate(in) + n chloride(out). Functionally, acts as a membrane potential-dependent organic anion transporter, the transport requires a low concentration of chloride ions. Mediates chloride-dependent transport of urate. Can actively transport inorganic phosphate into cells via Na(+) cotransport. This chain is Sodium-dependent phosphate transport protein 3 (Slc17a2), found in Mus musculus (Mouse).